The sequence spans 55 residues: ATP synthase F(0) complex subunit 8 (55 aa).

Residues 4–24 form a helical membrane-spanning segment; the sequence is LNPHPWFSIFITSWLILIIIL.

It belongs to the ATPase protein 8 family. Component of the ATP synthase complex composed at least of ATP5F1A/subunit alpha, ATP5F1B/subunit beta, ATP5MC1/subunit c (homooctomer), MT-ATP6/subunit a, MT-ATP8/subunit 8, ATP5ME/subunit e, ATP5MF/subunit f, ATP5MG/subunit g, ATP5MK/subunit k, ATP5MJ/subunit j, ATP5F1C/subunit gamma, ATP5F1D/subunit delta, ATP5F1E/subunit epsilon, ATP5PF/subunit F6, ATP5PB/subunit b, ATP5PD/subunit d, ATP5PO/subunit OSCP. ATP synthase complex consists of a soluble F(1) head domain (subunits alpha(3) and beta(3)) - the catalytic core - and a membrane F(0) domain - the membrane proton channel (subunits c, a, 8, e, f, g, k and j). These two domains are linked by a central stalk (subunits gamma, delta, and epsilon) rotating inside the F1 region and a stationary peripheral stalk (subunits F6, b, d, and OSCP).

It localises to the mitochondrion membrane. Subunit 8, of the mitochondrial membrane ATP synthase complex (F(1)F(0) ATP synthase or Complex V) that produces ATP from ADP in the presence of a proton gradient across the membrane which is generated by electron transport complexes of the respiratory chain. ATP synthase complex consist of a soluble F(1) head domain - the catalytic core - and a membrane F(1) domain - the membrane proton channel. These two domains are linked by a central stalk rotating inside the F(1) region and a stationary peripheral stalk. During catalysis, ATP synthesis in the catalytic domain of F(1) is coupled via a rotary mechanism of the central stalk subunits to proton translocation. In vivo, can only synthesize ATP although its ATP hydrolase activity can be activated artificially in vitro. Part of the complex F(0) domain. The protein is ATP synthase F(0) complex subunit 8 of Pelomedusa subrufa (African side-necked turtle).